Consider the following 228-residue polypeptide: UPF0173 metal-dependent hydrolase RBAM_026340 (228 aa).

It belongs to the UPF0173 family.

In Bacillus velezensis (strain DSM 23117 / BGSC 10A6 / LMG 26770 / FZB42) (Bacillus amyloliquefaciens subsp. plantarum), this protein is UPF0173 metal-dependent hydrolase RBAM_026340.